Reading from the N-terminus, the 98-residue chain is NADH-ubiquinone oxidoreductase chain 4L (98 aa).

The next 3 membrane-spanning stretches (helical) occupy residues 1 to 21, 28 to 48, and 59 to 79; these read MTPLNINLTMAFFLALAGVLI, STLLCLEGMMLSLFILLSLLI, and APLILLVFSACEAGVGLALLV.

Belongs to the complex I subunit 4L family. Core subunit of respiratory chain NADH dehydrogenase (Complex I) which is composed of 45 different subunits.

The protein resides in the mitochondrion inner membrane. The enzyme catalyses a ubiquinone + NADH + 5 H(+)(in) = a ubiquinol + NAD(+) + 4 H(+)(out). Core subunit of the mitochondrial membrane respiratory chain NADH dehydrogenase (Complex I) which catalyzes electron transfer from NADH through the respiratory chain, using ubiquinone as an electron acceptor. Part of the enzyme membrane arm which is embedded in the lipid bilayer and involved in proton translocation. This chain is NADH-ubiquinone oxidoreductase chain 4L (MT-ND4L), found in Tarsipes rostratus (Honey possum).